We begin with the raw amino-acid sequence, 211 residues long: uncharacterized protein (211 aa).

This is an uncharacterized protein from Dictyostelium discoideum (Social amoeba).